The sequence spans 243 residues: uncharacterized protein (243 aa).

4 consecutive transmembrane segments (helical) span residues 38 to 58 (AYFLFLLSFFVTAVMFLVGIF), 99 to 119 (FGIAILALGLFSLFLMIFLGY), 143 to 163 (FYFSVVAYCFWIALMLLFLVL), and 204 to 224 (AFATALCITLVVYELPFLGLF).

The protein resides in the cell membrane. This is an uncharacterized protein from Mycoplasma pneumoniae (strain ATCC 29342 / M129 / Subtype 1) (Mycoplasmoides pneumoniae).